Consider the following 832-residue polypeptide: pre-rRNA 2'-O-ribose RNA methyltransferase FTSJ3 (832 aa).

Positions 56, 58, 76, 92, and 117 each coordinate S-adenosyl-L-methionine. Lysine 157 (proton acceptor) is an active-site residue. Disordered regions lie at residues 332 to 358, 485 to 523, and 546 to 631; these read INLS…ADEM, RLER…LEEK, and DADE…GLVE. 2 stretches are compositionally biased toward basic and acidic residues: residues 345 to 358 and 485 to 495; these read EEEK…ADEM and RLERERREQGV. Acidic residues predominate over residues 503–514; sequence EEEEEEEEEEEN. Residues 570 to 579 are compositionally biased toward basic residues; the sequence is KTKKKGQKKK. Residues 600 to 618 show a composition bias toward acidic residues; it reads AEAEAEQSSDDDSSSDEEG. Residues 726 to 758 adopt a coiled-coil conformation; sequence IKKVAEAKARKKRRMLKKMEQMKKKAEAVVSTV. Positions 795-832 are disordered; the sequence is GPRVRRPPGVKGQFKVVDSRLKKDVRAQKRKEQKKRRK. The span at 811–821 shows a compositional bias: basic and acidic residues; that stretch reads VDSRLKKDVRA. Positions 822–832 are enriched in basic residues; that stretch reads QKRKEQKKRRK.

It belongs to the class I-like SAM-binding methyltransferase superfamily. RNA methyltransferase RlmE family. SPB1 subfamily. In terms of assembly, interacts with NIP7.

Its subcellular location is the nucleus. The protein resides in the nucleolus. The enzyme catalyses a ribonucleotide in rRNA + S-adenosyl-L-methionine = a 2'-O-methylribonucleotide in rRNA + S-adenosyl-L-homocysteine + H(+). Its function is as follows. RNA 2'-O-methyltransferase involved in the processing of the 34S pre-rRNA to 18S rRNA and in 40S ribosomal subunit formation. This Gallus gallus (Chicken) protein is pre-rRNA 2'-O-ribose RNA methyltransferase FTSJ3.